A 1004-amino-acid polypeptide reads, in one-letter code: Hyaluronate lyase HylB (1004 aa).

The first 29 residues, 1–29 (MKNRKIWVMLVGLFTALTNGFMGTTLTFA), serve as a signal peptide directing secretion. Catalysis depends on residues histidine 468, tyrosine 477, and arginine 531.

It belongs to the polysaccharide lyase 8 family.

It localises to the secreted. The catalysed reaction is [hyaluronan](n) = n 3-(4-deoxy-beta-D-gluc-4-enuronosyl)-N-acetyl-D-glucosamine + H2O. It catalyses the reaction Eliminative degradation of polysaccharides containing 1,4-beta-D-hexosaminyl and 1,3-beta-D-glucuronosyl linkages to disaccharides containing 4-deoxy-beta-D-gluc-4-enuronosyl groups.. Degrades hyaluronic acid (HA) and chondroitin sulfate (CS) A in vitro. Is not active against heparin sodium salt (HS). Involved in the pathogenesis of vancomycin-resistant E.faecalis infections. Contributes to attenuation of the lipopolysaccharide (LPS)-mediated nuclear factor (NF)-kappa-B activation assayed in the mouse RAW-Blue reporter macrophages. The polypeptide is Hyaluronate lyase HylB (Enterococcus faecalis (strain ATCC 700802 / V583)).